Here is an 88-residue protein sequence, read N- to C-terminus: Small ribosomal subunit protein bS18B (88 aa).

The protein belongs to the bacterial ribosomal protein bS18 family. As to quaternary structure, part of the 30S ribosomal subunit. Forms a tight heterodimer with protein bS6.

Its function is as follows. Binds as a heterodimer with protein bS6 to the central domain of the 16S rRNA, where it helps stabilize the platform of the 30S subunit. The chain is Small ribosomal subunit protein bS18B (rpsR2) from Mycobacterium bovis (strain ATCC BAA-935 / AF2122/97).